The following is a 2327-amino-acid chain: Genome polyprotein (2327 aa).

Positions 1-201 (MNTTDCFIAV…WKANVQRKLK (201 aa)) constitute a Peptidase C28 domain. Topologically, residues 1–1475 (MNTTDCFIAV…SFVKRAFKRL (1475 aa)) are cytoplasmic. Active-site for leader protease activity residues include cysteine 51, histidine 148, and aspartate 163. Disordered stretches follow at residues 199–218 (KLKG…QSGN) and 238–265 (QLGD…NTQN). Glycine 202 carries the N-myristoyl glycine; by host lipid modification. Composition is skewed to polar residues over residues 204 to 218 (GQSS…QSGN) and 238 to 251 (QLGD…SNEG). The segment covering 252 to 265 (STDTTSTHTTNTQN) has biased composition (low complexity). The segment at 787-795 (ALLRAATYY) is antigenic epitope. A Cell attachment site motif is present at residues 864 to 866 (RGD). An SF3 helicase domain is found at 1184–1348 (NVHIANLCKV…DGYKINNKLD (165 aa)). 1212-1219 (GKSGQGKS) provides a ligand contact to ATP. An intramembrane segment occupies 1476-1496 (KENFEIVALCLTLLANIVIMI). The Cytoplasmic segment spans residues 1497-2327 (RETHKRQKMV…RWVNAVCGDA (831 aa)). Composition is skewed to basic and acidic residues over residues 1524–1533 (KTLDEAEKNP) and 1544–1558 (FRER…RDDV). The disordered stretch occupies residues 1524–1579 (KTLDEAEKNPLETSGASTVGFRERTLPGQKARDDVNSEPAQPTEEQPQAEGPYAGP). 3 positions are modified to O-(5'-phospho-RNA)-tyrosine: tyrosine 1576, tyrosine 1599, and tyrosine 1623. Positions 1647 to 1843 (APPTDLQKMV…YCSCVSRSML (197 aa)) constitute a Peptidase C3 domain. The active-site For protease 3C activity; Proton donor/acceptor is the histidine 1690. Active-site for protease 3C activity residues include aspartate 1728 and cysteine 1807. Residues 1873 to 1881 (MRKTKLAPT) carry the Nuclear localization signal motif. The RdRp catalytic domain occupies 2091–2209 (RNVWDVDYSA…ASDYDLDFEA (119 aa)). The active-site For RdRp activity is the aspartate 2195.

This sequence belongs to the picornaviruses polyprotein family. As to quaternary structure, interacts with host ISG15. In terms of assembly, interacts (via R-G-D motif) with host ITGAV/ITGB6. Interacts with host MAVS; this interaction inhibits binding of host TRAF3 to MAVS, thereby suppressing interferon-mediated responses. Forms homooligomers. As to quaternary structure, homohexamer. Interacts with host VIM. Interacts with host BECN1. In terms of assembly, interacts with host DCTN3. Interacts with RNA-dependent RNA polymerase; this interaction allows 3B-1 to binds 2 polymerases and act as a primer. It also allows the recruitment of the RNA-dependent RNA polymerase to host membranes. As to quaternary structure, interacts with RNA-dependent RNA polymerase; this interaction allows 3B-2 to act as a primer. In terms of assembly, interacts with RNA-dependent RNA polymerase; this interaction allows 3B-3 to act as a primer. Interacts with 3B-1; this interaction allows 3B-1 to binds 2 polymerases and act as a primer. It also allows the recruitment of the RNA-dependent RNA polymerase to host membranes. Interacts with 3B-2; this interaction allows 3B-2 to act as a primer. Interacts with 3B-3; this interaction allows 3B-3 to act as a primer. Removes six residues from its own C-terminus, generating sLb(pro). In terms of processing, specific enzymatic cleavages in vivo by the viral proteases yield a variety of precursors and mature proteins. The polyprotein seems to be cotranslationally cleaved at the 2A/2B junction by a ribosomal skip from one codon to the next without formation of a peptide bond. This process would release the L-P1-2A peptide from the translational complex. Post-translationally, during virion maturation, immature virions are rendered infectious following cleavage of VP0 into VP4 and VP2. This maturation seems to be an autocatalytic event triggered by the presence of RNA in the capsid and is followed by a conformational change of the particle. Myristoylation is required during RNA encapsidation and formation of the mature virus particle. In terms of processing, uridylylated by the polymerase and covalently linked to the 5'-end of genomic RNA. These uridylylated forms act as a nucleotide-peptide primer for the polymerase.

Its subcellular location is the host nucleus. It is found in the host cytoplasm. The protein localises to the virion. It localises to the host endoplasmic reticulum membrane. The protein resides in the host cytoplasmic vesicle membrane. It carries out the reaction Autocatalytically cleaves itself from the polyprotein of the foot-and-mouth disease virus by hydrolysis of a Lys-|-Gly bond, but then cleaves host cell initiation factor eIF-4G at bonds -Gly-|-Arg- and -Lys-|-Arg-.. The catalysed reaction is a ribonucleoside 5'-triphosphate + H2O = a ribonucleoside 5'-diphosphate + phosphate + H(+). The enzyme catalyses RNA(n) + a ribonucleoside 5'-triphosphate = RNA(n+1) + diphosphate. It catalyses the reaction Selective cleavage of Gln-|-Gly bond in the poliovirus polyprotein. In other picornavirus reactions Glu may be substituted for Gln, and Ser or Thr for Gly.. Autocatalytically cleaves itself from the polyprotein at the L/VP0 junction. Also cleaves the host translation initiation factors EIF4G1 and EIF4G3, in order to shut off the capped cellular mRNA transcription. Plays a role in counteracting host innate antiviral response using diverse mechanisms. Possesses a deubiquitinase activity acting on both 'Lys-48' and 'Lys-63'-linked polyubiquitin chains. In turn, inhibits the ubiquitination and subsequent activation of key signaling molecules of type I IFN response such as host RIGI, TBK1, TRAF3 and TRAF6. Inhibits host NF-kappa-B activity by inducing a decrease in RELA mRNA levels. Cleaves a peptide bond in the C-terminus of host ISG15, resulting in the damaging of this modifier that can no longer be attached to target proteins. Also cleaves host G3BP1 and G3BP2 in order to inhibit cytoplasmic stress granules assembly. Functionally, lies on the inner surface of the capsid shell. After binding to the host receptor, the capsid undergoes conformational changes. Capsid protein VP4 is released, capsid protein VP1 N-terminus is externalized, and together, they shape a pore in the host membrane through which the viral genome is translocated into the host cell cytoplasm. After genome has been released, the channel shrinks. Its function is as follows. Forms an icosahedral capsid of pseudo T=3 symmetry with capsid proteins VP1 and VP3. The capsid is composed of 60 copies of each capsid protein organized in the form of twelve pentamers and encloses the viral positive strand RNA genome. Upon acidifcation in the endosome, dissociates into pentamers. In terms of biological role, forms an icosahedral capsid of pseudo T=3 symmetry with capsid proteins VP0 and VP3. The capsid is composed of 60 copies of each capsid protein organized in the form of twelve pentamers and encloses the viral positive strand RNA genome. Upon acidifcation in the endosome, dissociates into pentamers. Forms an icosahedral capsid of pseudo T=3 symmetry with capsid proteins VP2 and VP3. The capsid is composed of 60 copies of each capsid protein organized in the form of twelve pentamers and encloses the viral positive strand RNA genome. Mediates cell entry by attachment to an integrin receptor, usually host ITGAV/ITGB6. In addition, targets host MAVS to suppress type I IFN pathway. Upon acidifcation in the endosome, dissociates into pentamers. Functionally, mediates self-processing of the polyprotein by a translational effect termed 'ribosome skipping'. Mechanistically, 2A-mediated cleavage occurs between the C-terminal glycine and the proline of the downstream protein 2B. In the case of foot-and-mouth disease virus, the 2A oligopeptide is post-translationally 'trimmed' from the C-terminus of the upstream protein 1D by 3C proteinase. Its function is as follows. Plays an essential role in the virus replication cycle by acting as a viroporin. Creates a pore in the host endoplasmic reticulum and as a consequence releases Ca2+ in the cytoplasm of infected cell. In turn, high levels of cytoplasmic calcium may trigger membrane trafficking and transport of viral ER-associated proteins to viroplasms, sites of viral genome replication. In terms of biological role, associates with and induces structural rearrangements of intracellular membranes. Triggers host autophagy by interacting with host BECN1 and thereby promotes viral replication. Participates in viral replication and interacts with host DHX9. Displays RNA-binding, nucleotide binding and NTPase activities. May play a role in virion morphogenesis and viral RNA encapsidation by interacting with the capsid protein VP3. Plays important roles in virus replication, virulence and host range. Cooperates with host DDX56 to inhibit IRF3 nuclear translocation and subsequent type I interferon production. Functionally, covalently linked to the 5'-end of both the positive-strand and negative-strand genomic RNAs. Acts as a genome-linked replication primer. Its function is as follows. Cysteine protease that generates mature viral proteins from the precursor polyprotein. In addition to its proteolytic activity, binds to viral RNA and thus influences viral genome replication. RNA and substrate bind cooperatively to the protease. In terms of biological role, RNA-directed RNA polymerase 3D-POL replicates genomic and antigenomic RNA by recognizing replications specific signals. Covalently attaches UMP to a tyrosine of VPg, which is used to prime RNA synthesis. The positive stranded RNA genome is first replicated at virus induced membranous vesicles, creating a dsRNA genomic replication form. This dsRNA is then used as template to synthesize positive stranded RNA genomes. ss(+)RNA genomes are either translated, replicated or encapsidated. The sequence is that of Genome polyprotein from Bos taurus (Bovine).